Reading from the N-terminus, the 1562-residue chain is NAC-alpha domain-containing protein 1 (1562 aa).

Residues 1–13 are compositionally biased toward low complexity; that stretch reads MPGEAARAELLLP. Disordered stretches follow at residues 1 to 24, 56 to 110, 131 to 226, 249 to 288, 327 to 365, 381 to 458, 503 to 941, and 953 to 1423; these read MPGE…RTDL, FLPS…TEAP, SPRA…ADGD, SGWG…SSSW, TPLS…LQSL, RDDT…GAYL, TPQA…EPLA, and GCAP…AMSK. The span at 195–208 shows a compositional bias: basic and acidic residues; sequence GDARDSEAELRDEL. Positions 275-287 are enriched in low complexity; sequence SSESSLSADSSSS. Acidic residues predominate over residues 331 to 340; it reads PEEEEEEAVA. Residues 385–397 show a composition bias toward low complexity; that stretch reads SAASSDSDSASYA. Polar residues-rich tracts occupy residues 449–458 and 550–564; these read PQTSDRGAYL and QEET…SPQN. Residues 992-1007 show a composition bias toward low complexity; the sequence is PAALDQVQQDDPQPAA. Residues 1048–1074 show a composition bias toward basic and acidic residues; sequence PGREACLEARAHTGDGAKPDSPQKETL. Phosphoserine is present on Ser-1068. Low complexity-rich tracts occupy residues 1172–1182 and 1231–1241; these read APTSAPTSQQP and APGTLAGAALP. A compositionally biased stretch (acidic residues) spans 1254-1264; that stretch reads PQEDSVEDEEP. Low complexity-rich tracts occupy residues 1265–1284, 1298–1308, and 1335–1344; these read PGSL…AAAV, SLSPHSPLLSP, and QSPAGPQGLS. Residues 1348–1357 are compositionally biased toward acidic residues; that stretch reads QQEDEDSLEE. A Phosphoserine modification is found at Ser-1354. One can recognise an NAC-A/B domain in the interval 1411-1476; it reads SRSEKKARKA…AKIEDLSQQV (66 aa).

It belongs to the NAC-alpha family.

The protein resides in the cytoplasm. The protein localises to the nucleus. Functionally, may prevent inappropriate targeting of non-secretory polypeptides to the endoplasmic reticulum (ER). May bind to nascent polypeptide chains as they emerge from the ribosome and block their interaction with the signal recognition particle (SRP), which normally targets nascent secretory peptides to the ER. May also reduce the inherent affinity of ribosomes for protein translocation sites in the ER membrane (M sites). The protein is NAC-alpha domain-containing protein 1 (NACAD) of Homo sapiens (Human).